The sequence spans 81 residues: Large ribosomal subunit protein bL31B (81 aa).

The protein belongs to the bacterial ribosomal protein bL31 family. Type B subfamily. As to quaternary structure, part of the 50S ribosomal subunit.

In Lactobacillus helveticus (strain DPC 4571), this protein is Large ribosomal subunit protein bL31B.